The primary structure comprises 121 residues: MARIAGINIPPHQHAEIGLTAIYGIGRTTARKICEAAGIAYSKKIKELTDGDLEKIRDQLTSLTLEGDLRRETTMNIKRLMDIGCYRGFRHRRGLPMRGQRTRTNARTRKGPRKGAAALKK.

The tract at residues 94–121 (GLPMRGQRTRTNARTRKGPRKGAAALKK) is disordered.

This sequence belongs to the universal ribosomal protein uS13 family. Part of the 30S ribosomal subunit. Forms a loose heterodimer with protein S19. Forms two bridges to the 50S subunit in the 70S ribosome.

Functionally, located at the top of the head of the 30S subunit, it contacts several helices of the 16S rRNA. In the 70S ribosome it contacts the 23S rRNA (bridge B1a) and protein L5 of the 50S subunit (bridge B1b), connecting the 2 subunits; these bridges are implicated in subunit movement. Contacts the tRNAs in the A and P-sites. The chain is Small ribosomal subunit protein uS13 from Delftia acidovorans (strain DSM 14801 / SPH-1).